The sequence spans 519 residues: ATP synthase subunit beta, mitochondrial (519 aa).

195–202 contacts ATP; that stretch reads GGAGVGKT.

It belongs to the ATPase alpha/beta chains family. In terms of assembly, F-type ATPases have 2 components, CF(1) - the catalytic core - and CF(0) - the membrane proton channel. CF(1) has five subunits: alpha(3), beta(3), gamma(1), delta(1), epsilon(1). CF(0) has three main subunits: a, b and c.

It is found in the mitochondrion. The protein localises to the mitochondrion inner membrane. It catalyses the reaction ATP + H2O + 4 H(+)(in) = ADP + phosphate + 5 H(+)(out). Its function is as follows. Mitochondrial membrane ATP synthase (F(1)F(0) ATP synthase or Complex V) produces ATP from ADP in the presence of a proton gradient across the membrane which is generated by electron transport complexes of the respiratory chain. F-type ATPases consist of two structural domains, F(1) - containing the extramembraneous catalytic core, and F(0) - containing the membrane proton channel, linked together by a central stalk and a peripheral stalk. During catalysis, ATP synthesis in the catalytic domain of F(1) is coupled via a rotary mechanism of the central stalk subunits to proton translocation. Subunits alpha and beta form the catalytic core in F(1). Rotation of the central stalk against the surrounding alpha(3)beta(3) subunits leads to hydrolysis of ATP in three separate catalytic sites on the beta subunits. The protein is ATP synthase subunit beta, mitochondrial (atp-2) of Neurospora crassa (strain ATCC 24698 / 74-OR23-1A / CBS 708.71 / DSM 1257 / FGSC 987).